We begin with the raw amino-acid sequence, 351 residues long: UDP-3-O-acylglucosamine N-acyltransferase (351 aa).

The active-site Proton acceptor is the His-240.

This sequence belongs to the transferase hexapeptide repeat family. LpxD subfamily. Homotrimer.

The catalysed reaction is a UDP-3-O-[(3R)-3-hydroxyacyl]-alpha-D-glucosamine + a (3R)-hydroxyacyl-[ACP] = a UDP-2-N,3-O-bis[(3R)-3-hydroxyacyl]-alpha-D-glucosamine + holo-[ACP] + H(+). It functions in the pathway bacterial outer membrane biogenesis; LPS lipid A biosynthesis. Its function is as follows. Catalyzes the N-acylation of UDP-3-O-acylglucosamine using 3-hydroxyacyl-ACP as the acyl donor. Is involved in the biosynthesis of lipid A, a phosphorylated glycolipid that anchors the lipopolysaccharide to the outer membrane of the cell. The polypeptide is UDP-3-O-acylglucosamine N-acyltransferase (Pseudomonas fluorescens (strain Pf0-1)).